A 208-amino-acid chain; its full sequence is Apoptosis inhibitor 193R (208 aa).

The segment at 1-25 (MDTCGIYNSDNEEFSQENDGENDGG) is disordered. Residues 10–23 (DNEEFSQENDGEND) are compositionally biased toward acidic residues. One copy of the BIR repeat lies at 37–108 (YDERLNSFQN…QDLKINCLFV (72 aa)). Cys74, Cys77, His94, and Cys105 together coordinate Zn(2+). 3 repeat units span residues 134–139 (NQDLDH), 140–145 (NQDLDH), and 146–151 (NQDLDQ). Residues 134-151 (NQDLDHNQDLDHNQDLDQ) form a 3 X 6 AA tandem repeats region. An RING-type zinc finger spans residues 163–197 (CKICFTNKITKVLIPCGHSSCYECVFKLQTCPICK).

The protein belongs to the IIV-6 193R family.

Its function is as follows. Plays a role early in infection by preventing host cell apoptosis. The polypeptide is Apoptosis inhibitor 193R (Invertebrate iridescent virus 6 (IIV-6)).